Here is a 74-residue protein sequence, read N- to C-terminus: MAAEPKAATAEVVKMDLFEDDDEFEEFEINEDWLEKEEVKEVSQQWEDDWDDDDVNDDFSRQLRKELENGTDKK.

Residues Glu-35–Lys-74 form a disordered region. The span at Trp-46–Asp-57 shows a compositional bias: acidic residues. Over residues Asp-58 to Lys-74 the composition is skewed to basic and acidic residues.

This sequence belongs to the DSS1/SEM1 family. In terms of assembly, part of the 26S proteasome. Interacts with BRCA2A and BRCA2B. Interacts with UCH1 and UCH2. Can form a tripartite complex with both RAD51 and BRCA2B or both DMC1 and BRCA2B.

Functionally, subunit of the 26S proteasome which plays a role in ubiquitin-dependent proteolysis. This Arabidopsis thaliana (Mouse-ear cress) protein is Protein DELETION OF SUV3 SUPPRESSOR 1(I).